Consider the following 1154-residue polypeptide: BEACH domain-containing protein lvsF (1154 aa).

Disordered regions lie at residues 92–123 (HLPT…EQPS) and 139–167 (TSKV…PTPT). A compositionally biased stretch (pro residues) spans 145–158 (PTPPTPTPTPPTPQ). The region spanning 289 to 384 (DMNERNILEL…TRNQVYDLLV (96 aa)) is the BEACH-type PH domain. One can recognise a BEACH domain in the interval 389-697 (TNIMHINEQA…QIFKTPHPQR (309 aa)). 3 disordered regions span residues 554–575 (SFES…NFEN), 739–762 (NNLN…LNNN), and 779–825 (NSLN…ENLN). 2 stretches are compositionally biased toward low complexity: residues 779–788 (NSLNNENNEN) and 795–822 (NSNS…NENE). 7 WD repeats span residues 858–897 (LHKD…QIRS), 900–939 (LCNL…ISYS), 942–980 (GHSD…NGAI), 992–1031 (DSDT…LIRR), 1034–1074 (CFFD…FSFK), 1076–1110 (KGEI…EIKD), and 1119–1154 (SSNE…IWQQ).

The sequence is that of BEACH domain-containing protein lvsF (lvsF) from Dictyostelium discoideum (Social amoeba).